The primary structure comprises 1020 residues: MGRGAGREYSPAATTAENGGGKKKQKEKELDELKKEVAMDDHKLSLDELGRKYQVDLSKGLTNQRAQDILARDGPNALTPPPTTPEWVKFCRQLFGGFSILLWIGAILCFLAFGIQAAMEDEPSNDNLYLGVVLAAVVIVTGCFSYYQEAKSSKIMDSFKNMVPQQALVVREGEKMQINAEEVVVGDLVEVKGGDRVPADLRIISSHGCKVDNSSLTGESEPQTRSPEFTHENPLETRNICFFSTNCVEGTARGIVIATGDRTVMGRIATLASGLEVGRTPIAMEIEHFIQLITGVAVFLGVSFFVLSLILGYSWLEAVIFLIGIIVANVPEGLLATVTVCLTLTAKRMARKNCLVKNLEAVETLGSTSTICSDKTGTLTQNRMTVAHMWFDNQIHEADTTEDQSGATFDKRSPTWTALSRIAGLCNRAVFKAGQENISVSKRDTAGDASESALLKCIELSCGSVRKMRDRNPKVAEIPFNSTNKYQLSIHEREDSPQSHVLVMKGAPERILDRCSSILVQGKEIPLDKEMQDAFQNAYLELGGLGERVLGFCQLNLPSAKFPRGFKFDTDELNFPTEKLCFVGLMSMIDPPRAAVPDAVGKCRSAGIKVIMVTGDHPITAKAIAKGVGIISEGNETVEDIAARLNIPVSQVNPREAKACVVHGSDLKDMTSEQLDEILKNHTEIVFARTSPQQKLIIVEGCQRQGAIVAVTGDGVNDSPALKKADIGIAMGIAGSDVSKQAADMILLDDNFASIVTGVEEGRLIFDNLKKSIAYTLTSNIPEITPFLLFIIANIPLPLGTVTILCIDLGTDMVPAISLAYEAAESDIMKRQPRNPQTDKLVNERLISMAYGQIGMIQALGGFFTYFVILAENGFLPSRLLGIRLDWDDRSMNDLEDSYGQEWTYEQRKVVEFTCHTAFFASIVVVQWADLIICKTRRNSVFQQGMKNKILIFGLLEETALAAFLSYCPGMGVALRMYPLKVTWWFCAFPYSLLIFIYDEVRKLILRRYPGGWVEKETYY.

A propeptide spanning residues 1–5 is cleaved from the precursor; the sequence is MGRGA. The disordered stretch occupies residues 1-31; the sequence is MGRGAGREYSPAATTAENGGGKKKQKEKELD. Residues 6-85 lie on the Cytoplasmic side of the membrane; it reads GREYSPAATT…NALTPPPTTP (80 aa). Position 10 is a phosphoserine (serine 10). The segment at 80–82 is interaction with phosphoinositide-3 kinase; sequence PPP. The chain crosses the membrane as a helical span at residues 86 to 106; that stretch reads EWVKFCRQLFGGFSILLWIGA. Over 107–129 the chain is Extracellular; that stretch reads ILCFLAFGIQAAMEDEPSNDNLY. A helical transmembrane segment spans residues 130-150; the sequence is LGVVLAAVVIVTGCFSYYQEA. The Cytoplasmic segment spans residues 151–286; sequence KSSKIMDSFK…VGRTPIAMEI (136 aa). The span at 212–227 shows a compositional bias: polar residues; that stretch reads DNSSLTGESEPQTRSP. Residues 212 to 231 form a disordered region; the sequence is DNSSLTGESEPQTRSPEFTH. A helical transmembrane segment spans residues 287–306; sequence EHFIQLITGVAVFLGVSFFV. Over 307–318 the chain is Extracellular; the sequence is LSLILGYSWLEA. The helical transmembrane segment at 319 to 336 threads the bilayer; that stretch reads VIFLIGIIVANVPEGLLA. Topologically, residues 337 to 769 are cytoplasmic; sequence TVTVCLTLTA…EEGRLIFDNL (433 aa). Residue aspartate 374 is the 4-aspartylphosphate intermediate of the active site. Serine 439, serine 450, serine 496, and serine 559 each carry phosphoserine. The residue at position 570 (threonine 570) is a Phosphothreonine. Serine 587 and serine 672 each carry phosphoserine. Residues aspartate 714 and aspartate 718 each contribute to the Mg(2+) site. A helical transmembrane segment spans residues 770–789; it reads KKSIAYTLTSNIPEITPFLL. The Extracellular segment spans residues 790 to 799; sequence FIIANIPLPL. The helical transmembrane segment at 800–820 threads the bilayer; it reads GTVTILCIDLGTDMVPAISLA. Residues 821-840 are Cytoplasmic-facing; it reads YEAAESDIMKRQPRNPQTDK. Serine 826 carries the post-translational modification Phosphoserine. A helical transmembrane segment spans residues 841–863; the sequence is LVNERLISMAYGQIGMIQALGGF. The Extracellular portion of the chain corresponds to 864–915; the sequence is FTYFVILAENGFLPSRLLGIRLDWDDRSMNDLEDSYGQEWTYEQRKVVEFTC. Residues 916 to 935 traverse the membrane as a helical segment; sequence HTAFFASIVVVQWADLIICK. The Cytoplasmic portion of the chain corresponds to 936 to 948; the sequence is TRRNSVFQQGMKN. Serine 940 is modified (phosphoserine; by PKA). A helical transmembrane segment spans residues 949 to 967; sequence KILIFGLLEETALAAFLSY. Residues 968 to 982 are Extracellular-facing; sequence CPGMGVALRMYPLKV. A helical membrane pass occupies residues 983 to 1003; sequence TWWFCAFPYSLLIFIYDEVRK. Over 1004–1020 the chain is Cytoplasmic; it reads LILRRYPGGWVEKETYY.

It belongs to the cation transport ATPase (P-type) (TC 3.A.3) family. Type IIC subfamily. In terms of assembly, the sodium/potassium-transporting ATPase is composed of a catalytic alpha subunit, an auxiliary non-catalytic beta subunit and an additional regulatory subunit. Interacts with regulatory subunit FXYD1.

It localises to the membrane. Its subcellular location is the cell membrane. The enzyme catalyses K(+)(out) + Na(+)(in) + ATP + H2O = K(+)(in) + Na(+)(out) + ADP + phosphate + H(+). Functionally, this is the catalytic component of the active enzyme, which catalyzes the hydrolysis of ATP coupled with the exchange of sodium and potassium ions across the plasma membrane. This action creates the electrochemical gradient of sodium and potassium, providing the energy for active transport of various nutrients. The protein is Sodium/potassium-transporting ATPase subunit alpha-2 (ATP1A2) of Bos taurus (Bovine).